We begin with the raw amino-acid sequence, 236 residues long: Probable calcium-binding protein CML30 (236 aa).

The segment at 43–64 is disordered; that stretch reads VVVVAKKRPEEEPRRPDPDADL. Residues 49-60 are compositionally biased toward basic and acidic residues; sequence KRPEEEPRRPDP. EF-hand domains lie at 59-94 and 96-131; these read DPDA…LGIA and SSAA…IPKR. Ca(2+) contacts are provided by D72, D74, D76, E83, D109, N111, D113, and E120. A disordered region spans residues 130 to 158; sequence KRRKSHQQHPLPSTAAADEEAAAADEEYE. A compositionally biased stretch (acidic residues) spans 146–158; sequence ADEEAAAADEEYE. 2 consecutive EF-hand domains span residues 161-196 and 202-236; these read EEER…LGLR and PAVA…VVKA. Residues D174, N176, D178, E185, D215, D217, D219, M221, and E226 each contribute to the Ca(2+) site.

Potential calcium sensor. In Oryza sativa subsp. japonica (Rice), this protein is Probable calcium-binding protein CML30 (CML30).